A 155-amino-acid polypeptide reads, in one-letter code: Prespore-specific protein E (155 aa).

The N-terminal stretch at 1–20 (MRFISIFLIIVALCVSSSWA) is a signal peptide. Asn-22, Asn-82, Asn-85, and Asn-102 each carry an N-linked (GlcNAc...) asparagine glycan. Ser-105 carries O-linked (GlcNAc) serine glycosylation. Asn-133 is lipidated: GPI-like-anchor amidated asparagine. Residues 134 to 155 (SADKVAVGIAIIFGALISLLAL) constitute a propeptide, removed in mature form.

Post-translationally, the GPI-like-anchor contains a phosphoceramide group, rather than a phosphatidyl group.

The protein localises to the cell membrane. The sequence is that of Prespore-specific protein E (pspE) from Dictyostelium discoideum (Social amoeba).